Consider the following 374-residue polypeptide: P2Y purinoceptor 11 (374 aa).

The Extracellular portion of the chain corresponds to 1 to 29; sequence MAANVSGAKSCPANFLAAADDKLSGFQGD. Asn4 carries an N-linked (GlcNAc...) asparagine glycan. A helical transmembrane segment spans residues 30–50; sequence FLWPILVVEFLVAVASNGLAL. Residues 51–64 are Cytoplasmic-facing; sequence YRFSIRKQRPWHPA. A helical transmembrane segment spans residues 65–85; sequence VVFSVQLAVSDLLCALTLPPL. The Extracellular segment spans residues 86–116; it reads AAYLYPPKHWRYGEAACRLERFLFTCNLLGS. A disulfide bridge links Cys102 with Cys180. The chain crosses the membrane as a helical span at residues 117 to 137; it reads VIFITCISLNRYLGIVHPFFA. Topologically, residues 138-146 are cytoplasmic; the sequence is RSHLRPKHA. Residues 147 to 167 form a helical membrane-spanning segment; sequence WAVSAAGWVLAALLAMPTLSF. Over 168–206 the chain is Extracellular; it reads SHLKRPQQGAGNCSVARPEACIKCLGTADHGLAAYRAYS. The N-linked (GlcNAc...) asparagine glycan is linked to Asn179. A helical membrane pass occupies residues 207 to 227; that stretch reads LVLAGLGCGLPLLLTLAAYGA. Residues 228–245 are Cytoplasmic-facing; the sequence is LGRAVLRSPGMTVAEKLR. Residues 246-266 traverse the membrane as a helical segment; sequence VAALVASGVALYASSYVPYHI. The Extracellular segment spans residues 267–308; the sequence is MRVLNVDARRRWSTRCPSFADIAQATAALELGPYVGYQVMRG. Residues 309–329 form a helical membrane-spanning segment; that stretch reads LMPLAFCVHPLLYMAAVPSLG. The Cytoplasmic portion of the chain corresponds to 330–374; it reads CCCRHCPGYRDSWNPEDAKSTGQALPLNATAAPKPSEPQSRELSQ. Residues 345-374 are disordered; it reads EDAKSTGQALPLNATAAPKPSEPQSRELSQ.

Belongs to the G-protein coupled receptor 1 family. In terms of tissue distribution, highest expression in liver and spleen.

The protein resides in the cell membrane. Its function is as follows. Receptor for ATP and ADP coupled to G-proteins that activate both phosphatidylinositol-calcium and adenylyl cyclase second messenger systems. Not activated by UTP or UDP. The protein is P2Y purinoceptor 11 (P2RY11) of Homo sapiens (Human).